Consider the following 308-residue polypeptide: D-alanine--D-alanine ligase (308 aa).

One can recognise an ATP-grasp domain in the interval 105-302 (KAIFKALGLD…FPELCERILD (198 aa)). 133–188 (DLPFGVPCVVKPAGEGSSVGVQIVKDAARLADACREAARYKGDVVVERYVKGTEVN) provides a ligand contact to ATP. Mg(2+) is bound by residues aspartate 256, glutamate 269, and asparagine 271.

Belongs to the D-alanine--D-alanine ligase family. Mg(2+) serves as cofactor. Requires Mn(2+) as cofactor.

It localises to the cytoplasm. The enzyme catalyses 2 D-alanine + ATP = D-alanyl-D-alanine + ADP + phosphate + H(+). Its pathway is cell wall biogenesis; peptidoglycan biosynthesis. In terms of biological role, cell wall formation. The polypeptide is D-alanine--D-alanine ligase (Anaeromyxobacter sp. (strain Fw109-5)).